Reading from the N-terminus, the 163-residue chain is Nucleotide-binding protein KPN78578_03700 (163 aa).

The protein belongs to the YajQ family.

Its function is as follows. Nucleotide-binding protein. The protein is Nucleotide-binding protein KPN78578_03700 of Klebsiella pneumoniae subsp. pneumoniae (strain ATCC 700721 / MGH 78578).